We begin with the raw amino-acid sequence, 204 residues long: UPF0056 membrane protein CT_852 (204 aa).

Transmembrane regions (helical) follow at residues 9-29 (TLLFYALFNALGSLPVFIALL), 39-59 (HIILRESIFALLLLLLFVTFG), 66-86 (LGIILPAFQFTGSLLLGSIAI), 107-127 (IFFPLAFPVITGPAMITSTLG), 138-158 (IVLGAIVLAWLFSLITLLLSS), and 176-196 (FGISLALMAGNLMLKALSTAF).

Belongs to the UPF0056 (MarC) family.

It is found in the cell membrane. In Chlamydia trachomatis serovar D (strain ATCC VR-885 / DSM 19411 / UW-3/Cx), this protein is UPF0056 membrane protein CT_852.